Consider the following 117-residue polypeptide: Large ribosomal subunit protein bL19 (117 aa).

This sequence belongs to the bacterial ribosomal protein bL19 family.

This protein is located at the 30S-50S ribosomal subunit interface and may play a role in the structure and function of the aminoacyl-tRNA binding site. This Shewanella woodyi (strain ATCC 51908 / MS32) protein is Large ribosomal subunit protein bL19.